Reading from the N-terminus, the 73-residue chain is Translation initiation factor IF-1 (73 aa).

In terms of domain architecture, S1-like spans 1 to 73 (MAKKDGAIEV…SRGRIVYRYK (73 aa)).

It belongs to the IF-1 family. As to quaternary structure, component of the 30S ribosomal translation pre-initiation complex which assembles on the 30S ribosome in the order IF-2 and IF-3, IF-1 and N-formylmethionyl-tRNA(fMet); mRNA recruitment can occur at any time during PIC assembly.

It is found in the cytoplasm. Functionally, one of the essential components for the initiation of protein synthesis. Stabilizes the binding of IF-2 and IF-3 on the 30S subunit to which N-formylmethionyl-tRNA(fMet) subsequently binds. Helps modulate mRNA selection, yielding the 30S pre-initiation complex (PIC). Upon addition of the 50S ribosomal subunit IF-1, IF-2 and IF-3 are released leaving the mature 70S translation initiation complex. The chain is Translation initiation factor IF-1 from Mycolicibacterium smegmatis (strain ATCC 700084 / mc(2)155) (Mycobacterium smegmatis).